A 229-amino-acid polypeptide reads, in one-letter code: 2-C-methyl-D-erythritol 4-phosphate cytidylyltransferase (229 aa).

The protein belongs to the IspD/TarI cytidylyltransferase family. IspD subfamily.

It carries out the reaction 2-C-methyl-D-erythritol 4-phosphate + CTP + H(+) = 4-CDP-2-C-methyl-D-erythritol + diphosphate. Its pathway is isoprenoid biosynthesis; isopentenyl diphosphate biosynthesis via DXP pathway; isopentenyl diphosphate from 1-deoxy-D-xylulose 5-phosphate: step 2/6. In terms of biological role, catalyzes the formation of 4-diphosphocytidyl-2-C-methyl-D-erythritol from CTP and 2-C-methyl-D-erythritol 4-phosphate (MEP). The chain is 2-C-methyl-D-erythritol 4-phosphate cytidylyltransferase from Clostridium botulinum (strain Loch Maree / Type A3).